We begin with the raw amino-acid sequence, 977 residues long: MRGYHGDRGSHPRPARFADQQHMDVGPAARAPYLLGSREAFSTEPRFCAPRAGLGHLSPEGPLSLSEGPSSVGPEGGPGGVGAGGGSSTFPRMYPGQGPFDTCEDCVGHPQGKGATRLPPTLLDQFEKQLPVQQDGFHTLPYQRGPAGPGPGPGSGAAPEARSESPSRIRHLVHSVQKLFAKSHSLEAPGKRDYNGPKADGRGSSGGDSYSGPGSGGTPTSHHHHHHHHHHHHQSRHGKRSKSKDRKGDGRHQTKATGWWSSDDNLDSDSGFLGGRPPGEPGGPFCLDAPDGSYRDLSFKGRSGGSEGRCLACTGMSMSLDGQSVKRSAWHTMMVSQGRDGYPGAGPGKGLLGPETKAKARTYHYLQVPQDDWGGYPTGGKDGEIPCRRMRSGSYIKAMGDEESGDSDGSPKTSPKALARRFASRRSSSVDTARINCCVPPRIHPRSSIPGYSRSLTTGQLSEEFNQQLEAVCGSVFGELESQAVDALDLPGCFRMRSHSYLRAIQAGCSQDDDCLPLLAAPASVSGRPGSSFNFRKAPPPIPPGSQAPPRISITAQSSTDSAHESFTAAEGPARRCSSADGLDGPTMGARTLELAPVPPRASPKPPTLIIKTIPGREELRSLARQRKWRPSIGVQVETISDSDTENRSRREFHSIGVQVEEDKRRARFKRSNSVTAGVQADLELEGLAGLATVATEDKALQFGRSFQRHASEPQPGPRAPTYSVFRTVHTQGQWAYREGYPLPYEPPATDGSPGPTPVPAPGPGSGRRDSWMERGSRSLPDSGRTSPCPRDGEWFIKMLRAEVEKLEHWCQQMEREAEDYELPEEILEKIRSAVGSTQLLLSQKVQQFFRLCQQSLDPTAFPVPTFQDLAGFWDLLQLSIEDVTLKFLELQQLKANSWKLLEPKEEKKVPPPIPKKPSRGRGVPVKERSLDSVDRQRQEARKRLLAAKRAASFRHSSATESADSIEIYIPEAQTRL.

Basic and acidic residues predominate over residues 1 to 10 (MRGYHGDRGS). 6 disordered regions span residues 1-24 (MRGY…QHMD), 52-96 (AGLG…MYPG), 137-167 (FHTL…ESPS), 181-289 (AKSH…CLDA), 398-417 (AMGD…SPKA), and 529-582 (PGSS…SADG). The segment covering 53-73 (GLGHLSPEGPLSLSEGPSSVG) has biased composition (low complexity). Ser58 bears the Phosphoserine mark. Residues 74 to 87 (PEGGPGGVGAGGGS) are compositionally biased toward gly residues. The span at 189-201 (PGKRDYNGPKADG) shows a compositional bias: basic and acidic residues. Residues 221–245 (SHHHHHHHHHHHHQSRHGKRSKSKD) show a composition bias toward basic residues. Residues 258–271 (GWWSSDDNLDSDSG) show a composition bias toward low complexity. A phosphoserine mark is found at Ser404, Ser407, Ser410, and Ser414. Over residues 538–547 (APPPIPPGSQ) the composition is skewed to pro residues. Phosphoserine is present on residues Ser641 and Ser643. Disordered stretches follow at residues 739–788 (EGYP…RTSP) and 906–939 (EEKK…RQRQ). Composition is skewed to basic and acidic residues over residues 767-777 (GRRDSWMERGS) and 925-939 (PVKE…RQRQ). A phosphoserine mark is found at Ser930, Ser933, and Ser965.

It belongs to the SAPAP family. Interacts with DLG4/PSD-95. Highly expressed in central and peripherical nervous system (at protein level).

The protein resides in the cell membrane. It localises to the postsynaptic density. Its subcellular location is the synapse. Functionally, may play a role in the molecular organization of synapses and neuronal cell signaling. Could be an adapter protein linking ion channel to the subsynaptic cytoskeleton. May induce enrichment of PSD-95/SAP90 at the plasma membrane. The sequence is that of Disks large-associated protein 3 (Dlgap3) from Mus musculus (Mouse).